The sequence spans 119 residues: MIGIDIVSIARVEKCVKRFKMRFLERFLSPSEIVLCKDKSSSIAGFFALKEACSKALQVGIGKELSFLDIKISKSPKNAPLITLSKEKMDYFNIQSLSASISHDAGFAIAVVMVSSLNR.

Asp-5 and Glu-51 together coordinate Mg(2+).

This sequence belongs to the P-Pant transferase superfamily. AcpS family. Mg(2+) serves as cofactor.

The protein localises to the cytoplasm. The catalysed reaction is apo-[ACP] + CoA = holo-[ACP] + adenosine 3',5'-bisphosphate + H(+). Its function is as follows. Transfers the 4'-phosphopantetheine moiety from coenzyme A to a Ser of acyl-carrier-protein. In Helicobacter pylori (strain HPAG1), this protein is Holo-[acyl-carrier-protein] synthase.